The chain runs to 397 residues: Putative 8-amino-7-oxononanoate synthase (397 aa).

Arg22 provides a ligand contact to substrate. Residue 109 to 110 (GW) coordinates pyridoxal 5'-phosphate. Residue His139 coordinates substrate. Residues Ser187, 212-215 (DEAH), and 241-244 (TFSK) contribute to the pyridoxal 5'-phosphate site. Lys244 carries the N6-(pyridoxal phosphate)lysine modification. Thr358 contacts substrate.

It belongs to the class-II pyridoxal-phosphate-dependent aminotransferase family. BioF subfamily. In terms of assembly, homodimer. Pyridoxal 5'-phosphate is required as a cofactor.

It catalyses the reaction 6-carboxyhexanoyl-[ACP] + L-alanine + H(+) = (8S)-8-amino-7-oxononanoate + holo-[ACP] + CO2. It functions in the pathway cofactor biosynthesis; biotin biosynthesis. Catalyzes the decarboxylative condensation of pimeloyl-[acyl-carrier protein] and L-alanine to produce 8-amino-7-oxononanoate (AON), [acyl-carrier protein], and carbon dioxide. This chain is Putative 8-amino-7-oxononanoate synthase (bioF), found in Bordetella parapertussis (strain 12822 / ATCC BAA-587 / NCTC 13253).